Consider the following 104-residue polypeptide: SOSS complex subunit C (104 aa).

This sequence belongs to the SOSS-C family. Belongs to the multiprotein complex Integrator. Component of the SOSS complex, composed of SOSS-B (SOSS-B1/NABP2 or SOSS-B2/NABP1), SOSS-A/INTS3 and SOSS-C/INIP.

It localises to the nucleus. In terms of biological role, component of the SOSS complex, a multiprotein complex that functions downstream of the MRN complex to promote DNA repair and G2/M checkpoint. The SOSS complex associates with single-stranded DNA at DNA lesions and influences diverse endpoints in the cellular DNA damage response including cell-cycle checkpoint activation, recombinational repair and maintenance of genomic stability. Required for efficient homologous recombination-dependent repair of double-strand breaks (DSBs). The chain is SOSS complex subunit C (INIP) from Taeniopygia guttata (Zebra finch).